A 433-amino-acid chain; its full sequence is Mitochondrial distribution and morphology protein 12 (433 aa).

Positions M1–I433 constitute an SMP-LTD domain. 3 disordered regions span residues L62 to M113, T180 to E279, and G356 to R376. Positions S81–N96 are enriched in basic and acidic residues. Residues S214–V236 are compositionally biased toward polar residues. Residues P268 to E279 show a composition bias toward basic and acidic residues.

Belongs to the MDM12 family. As to quaternary structure, component of the ER-mitochondria encounter structure (ERMES) or MDM complex, composed of MMM1, MDM10, MDM12 and MDM34. An MMM1 homodimer associates with one molecule of MDM12 on each side in a pairwise head-to-tail manner, and the SMP-LTD domains of MMM1 and MDM12 generate a continuous hydrophobic tunnel for phospholipid trafficking.

Its subcellular location is the mitochondrion outer membrane. It is found in the endoplasmic reticulum membrane. Functionally, component of the ERMES/MDM complex, which serves as a molecular tether to connect the endoplasmic reticulum (ER) and mitochondria. Components of this complex are involved in the control of mitochondrial shape and protein biogenesis, and function in nonvesicular lipid trafficking between the ER and mitochondria. MDM12 is required for the interaction of the ER-resident membrane protein MMM1 and the outer mitochondrial membrane-resident beta-barrel protein MDM10. The MDM12-MMM1 subcomplex functions in the major beta-barrel assembly pathway that is responsible for biogenesis of all mitochondrial outer membrane beta-barrel proteins, and acts in a late step after the SAM complex. The MDM10-MDM12-MMM1 subcomplex further acts in the TOM40-specific pathway after the action of the MDM12-MMM1 complex. Essential for establishing and maintaining the structure of mitochondria and maintenance of mtDNA nucleoids. This is Mitochondrial distribution and morphology protein 12 from Ajellomyces capsulatus (strain NAm1 / WU24) (Darling's disease fungus).